The sequence spans 1181 residues: WD repeat-containing protein 35 (1181 aa).

WD repeat units follow at residues 12–51, 69–108, 113–152, 154–193, and 502–539; these read PNNVKLKCISWNKDQGFIACGGEDGLLKVLRLETQTDDSK, GHSGAVQVVTWNEQYQKLTTSDQNGLIIVWMLYKGSWYEE, RNKSVVRSMSWNADGQKICIVYEDGAVIVGSVDGNRIWGK, LKGIQLCHVTWSADSKILLFGMANGEIHIYDNQGNFIMKM, and GTRDPICAITASDKTLIVGRESGVIQRYSFPNVALIQK.

In terms of assembly, component of the IFT complex A (IFT-A) complex. IFT-A complex is divided into a core subcomplex composed of IFT122:IFT140:WDR19 which is associated with TULP3 and a peripheral subcomplex composed of IFT43:WDR35:TTC21B. Interacts directy with IFT122, ITF43 and TTC21B. Interacts with IFT43. Interacts with CFAP61.

Its subcellular location is the cytoplasm. The protein localises to the cytoskeleton. The protein resides in the microtubule organizing center. It is found in the centrosome. It localises to the cilium axoneme. Its subcellular location is the cilium basal body. As a component of the IFT complex A (IFT-A), a complex required for retrograde ciliary transport and entry into cilia of G protein-coupled receptors (GPCRs), it is involved in ciliogenesis and ciliary protein trafficking. May promote CASP3 activation and TNF-stimulated apoptosis. The chain is WD repeat-containing protein 35 from Mus musculus (Mouse).